The following is a 333-amino-acid chain: Glycerol-3-phosphate dehydrogenase [NAD(P)+] (333 aa).

W13, K33, and K108 together coordinate NADPH. Sn-glycerol 3-phosphate-binding residues include K108 and G138. S142 provides a ligand contact to NADPH. K193, D246, S256, R257, and N258 together coordinate sn-glycerol 3-phosphate. The active-site Proton acceptor is the K193. R257 serves as a coordination point for NADPH. NADPH-binding residues include V281 and E283.

The protein belongs to the NAD-dependent glycerol-3-phosphate dehydrogenase family.

The protein resides in the cytoplasm. The enzyme catalyses sn-glycerol 3-phosphate + NAD(+) = dihydroxyacetone phosphate + NADH + H(+). The catalysed reaction is sn-glycerol 3-phosphate + NADP(+) = dihydroxyacetone phosphate + NADPH + H(+). Its pathway is membrane lipid metabolism; glycerophospholipid metabolism. Catalyzes the reduction of the glycolytic intermediate dihydroxyacetone phosphate (DHAP) to sn-glycerol 3-phosphate (G3P), the key precursor for phospholipid synthesis. The polypeptide is Glycerol-3-phosphate dehydrogenase [NAD(P)+] (Bifidobacterium longum subsp. infantis (strain ATCC 15697 / DSM 20088 / JCM 1222 / NCTC 11817 / S12)).